A 409-amino-acid chain; its full sequence is Arginine deiminase (409 aa).

Catalysis depends on cysteine 398, which acts as the Amidino-cysteine intermediate.

This sequence belongs to the arginine deiminase family.

It localises to the cytoplasm. It catalyses the reaction L-arginine + H2O = L-citrulline + NH4(+). It functions in the pathway amino-acid degradation; L-arginine degradation via ADI pathway; carbamoyl phosphate from L-arginine: step 1/2. The polypeptide is Arginine deiminase (Metamycoplasma arthritidis (strain 158L3-1) (Mycoplasma arthritidis)).